Reading from the N-terminus, the 731-residue chain is Elongation factor 2 (731 aa).

The tr-type G domain maps to Lys19 to Leu260. Residues Ala28–Thr35, Asp94–His98, and Asn148–Asp151 contribute to the GTP site. His597 bears the Diphthamide mark.

The protein belongs to the TRAFAC class translation factor GTPase superfamily. Classic translation factor GTPase family. EF-G/EF-2 subfamily.

Its subcellular location is the cytoplasm. Its function is as follows. Catalyzes the GTP-dependent ribosomal translocation step during translation elongation. During this step, the ribosome changes from the pre-translocational (PRE) to the post-translocational (POST) state as the newly formed A-site-bound peptidyl-tRNA and P-site-bound deacylated tRNA move to the P and E sites, respectively. Catalyzes the coordinated movement of the two tRNA molecules, the mRNA and conformational changes in the ribosome. The chain is Elongation factor 2 from Methanoregula boonei (strain DSM 21154 / JCM 14090 / 6A8).